Consider the following 950-residue polypeptide: RNA polymerase-associated protein RapA (950 aa).

In terms of domain architecture, Helicase ATP-binding spans 165–333 (EVADRMAPRV…FARLRLLDPN (169 aa)). 178–185 (DEVGLGKT) serves as a coordination point for ATP. Positions 279–282 (DEAH) match the DEAH box motif. Residues 475-629 (RVEWLIDTLK…TCPTGNALQH (155 aa)) enclose the Helicase C-terminal domain.

It belongs to the SNF2/RAD54 helicase family. RapA subfamily. In terms of assembly, interacts with the RNAP. Has a higher affinity for the core RNAP than for the holoenzyme. Its ATPase activity is stimulated by binding to RNAP.

Functionally, transcription regulator that activates transcription by stimulating RNA polymerase (RNAP) recycling in case of stress conditions such as supercoiled DNA or high salt concentrations. Probably acts by releasing the RNAP, when it is trapped or immobilized on tightly supercoiled DNA. Does not activate transcription on linear DNA. Probably not involved in DNA repair. This is RNA polymerase-associated protein RapA from Pseudomonas aeruginosa (strain LESB58).